Reading from the N-terminus, the 468-residue chain is MSNIYIQEPPTNGKVLLKTTAGDIDIELWSKEAPKACRNFIQLCLEAYYDNTIFHRVVPGFIVQGGDPTGTGTGGESVYGAPFKDEFHSRLRFNRRGLVAMANAGPHDNGSQFFFTLGRADELNNKHTIFGKVTGDTVYNMLRLTEVDIDDEERPRNPHRIKSCEVLFNPFDDIIPREIKKPKKEKAEEEIKKLKPKGTKNFSLLSFGEEAEEEEEEVNRVSQSMKGRSKSSHDLLKDDPHLSSVPAVESEKDDATGDLEDDAEDDSVEHDGSMEEDEKNLMRERIAKRLKKDASANVKSAGDGEKKPASRSEELRKEARQLKRELLAAKQKKESATKAEKGSEEEEAVPDGPVAEYRREKQKYEALRKQQPKKGTSREDQTLALLSQFKSKLTQAITEMPENCAEAEVEDDEGWMSHVLQFEDKTRKVKDASMQDSDTFEIYDPRNPVNKRRREESKKLLREKKERR.

Ser2 bears the N-acetylserine mark. The 156-residue stretch at 11 to 166 (TNGKVLLKTT…NPHRIKSCEV (156 aa)) folds into the PPIase cyclophilin-type domain. 2 disordered regions span residues 204-382 (LLSF…EDQT) and 427-468 (RKVK…KERR). A coiled-coil region spans residues 206–229 (SFGEEAEEEEEEVNRVSQSMKGRS). Basic and acidic residues predominate over residues 231-241 (SSHDLLKDDPH). Positions 256 to 268 (TGDLEDDAEDDSV) are enriched in acidic residues. Basic and acidic residues-rich tracts occupy residues 269 to 287 (EHDGSMEEDEKNLMRERIA) and 302 to 342 (GDGE…AEKG). Ser273 bears the Phosphoserine mark. The stretch at 309-342 (ASRSEELRKEARQLKRELLAAKQKKESATKAEKG) forms a coiled coil. Ser343 is subject to Phosphoserine. Basic and acidic residues-rich tracts occupy residues 356-368 (EYRREKQKYEALR) and 453-468 (RREESKKLLREKKERR).

Belongs to the cyclophilin-type PPIase family. Part of the activated spliceosome B/catalytic step 1 spliceosome, one of the forms of the spliceosome which has a well-formed active site but still cannot catalyze the branching reaction and is composed at least of 52 proteins, the U2, U5 and U6 snRNAs and the pre-mRNA. Recruited during early steps of activated spliceosome B maturation, it is probably one of the first proteins released from this complex as he matures to the spliceosome C complex. Component of the minor spliceosome, which splices U12-type introns.

It localises to the nucleus. Its function is as follows. As part of the spliceosome, plays a role in pre-mRNA splicing. Probable inactive PPIase with no peptidyl-prolyl cis-trans isomerase activity. As a component of the minor spliceosome, involved in the splicing of U12-type introns in pre-mRNAs. This chain is Spliceosome-associated protein CWC27 homolog, found in Rattus norvegicus (Rat).